The primary structure comprises 549 residues: Solute carrier family 22 member 6 (549 aa).

The Cytoplasmic segment spans residues 1–23 (MAFNDLLLQLGGVGRFQKIQVTL). A helical membrane pass occupies residues 24–44 (VILPLILLASHNTLQNFTAAI). Residues 45–135 (PTHHCRPPAD…LVCSHRALRQ (91 aa)) are Extracellular-facing. Asn-56, Asn-92, and Asn-113 each carry an N-linked (GlcNAc...) asparagine glycan. The chain crosses the membrane as a helical span at residues 136-156 (LAQSLYMMGVLLGAMTFGCLA). The Cytoplasmic segment spans residues 157-164 (DRLGRRKV). A helical membrane pass occupies residues 165 to 185 (LIFNYLQTAVSGTCAAFAPNF). Topologically, residues 186-195 (PAYCAFRFLS) are extracellular. A helical transmembrane segment spans residues 196-216 (GMSTAGVVLNCMTLNVEWMPI). Over 217 to 224 (HTRAYVGT) the chain is Cytoplasmic. The helical transmembrane segment at 225–245 (LTGYVYSLGQFLLAGMAYAVP) threads the bilayer. Topologically, residues 246-248 (HWR) are extracellular. The helical transmembrane segment at 249 to 269 (YLQLLVSAPFFAFFIYSWFFI) threads the bilayer. Residues 270–337 (ESARWYASSG…ELIRCPALRR (68 aa)) are Cytoplasmic-facing. The chain crosses the membrane as a helical span at residues 338 to 358 (LFLCLSMLWFATSFAYYGLVM). The Extracellular portion of the chain corresponds to 359-368 (DLQGFGVSIY). Residues 369–389 (LIQVIFGAVDLPAKLVSFLVI) form a helical membrane-spanning segment. At 390 to 395 (NNVGRR) the chain is on the cytoplasmic side. Residues 396-416 (PAQMASLLLAGICILINGVVP) traverse the membrane as a helical segment. At 417–425 (KDKSIVRTS) the chain is on the extracellular side. The helical transmembrane segment at 426–446 (LAVLGKGCLASSFNCIFLYTG) threads the bilayer. Residues 447 to 456 (EVYPTMIRQT) lie on the Cytoplasmic side of the membrane. The helical transmembrane segment at 457-477 (GLGMGSTLARVGSIVSPLVSM) threads the bilayer. Topologically, residues 478–484 (TAELYPS) are extracellular. A helical membrane pass occupies residues 485 to 505 (VPLFIYGAVPVAASAAIALLP). The Cytoplasmic segment spans residues 506–549 (ETLGQPLPDTVQDVENRRRGKTRKQQEELQKQMVPLQASAQVKN). The tract at residues 521–549 (NRRRGKTRKQQEELQKQMVPLQASAQVKN) is disordered.

This sequence belongs to the major facilitator (TC 2.A.1) superfamily. Organic cation transporter (TC 2.A.1.19) family. Post-translationally, glycosylated. Glycosylation is necessary for proper targeting of the transporter to the plasma membrane.

It localises to the basolateral cell membrane. The protein localises to the basal cell membrane. It carries out the reaction (6R)-L-erythro-5,6,7,8-tetrahydrobiopterin(out) + a dicarboxylate(in) = (6R)-L-erythro-5,6,7,8-tetrahydrobiopterin(in) + a dicarboxylate(out). It catalyses the reaction L-erythro-7,8-dihydrobiopterin(out) + a dicarboxylate(in) = L-erythro-7,8-dihydrobiopterin(in) + a dicarboxylate(out). The enzyme catalyses L-sepiapterin(out) + a dicarboxylate(in) = L-sepiapterin(in) + a dicarboxylate(out). The catalysed reaction is prostaglandin F2alpha(out) + a dicarboxylate(in) = prostaglandin F2alpha(in) + a dicarboxylate(out). It carries out the reaction prostaglandin E2(out) + a dicarboxylate(in) = prostaglandin E2(in) + a dicarboxylate(out). It catalyses the reaction 3',5'-cyclic AMP(out) + a dicarboxylate(in) = 3',5'-cyclic AMP(in) + a dicarboxylate(out). The enzyme catalyses 3',5'-cyclic GMP(out) + a dicarboxylate(in) = 3',5'-cyclic GMP(in) + a dicarboxylate(out). The catalysed reaction is urate(out) + a dicarboxylate(in) = urate(in) + a dicarboxylate(out). It carries out the reaction kynurenate(out) + glutarate(in) = kynurenate(in) + glutarate(out). It catalyses the reaction (indol-3-yl)acetate(out) + a dicarboxylate(in) = (indol-3-yl)acetate(in) + a dicarboxylate(out). The enzyme catalyses indoxyl sulfate(out) + a dicarboxylate(in) = indoxyl sulfate(in) + a dicarboxylate(out). The catalysed reaction is N-benzoylglycine(out) + a dicarboxylate(in) = N-benzoylglycine(in) + a dicarboxylate(out). It carries out the reaction 3-carboxy-4-methyl-5-propyl-2-furanpropanoate(out) + a dicarboxylate(in) = 3-carboxy-4-methyl-5-propyl-2-furanpropanoate(in) + a dicarboxylate(out). Its function is as follows. Secondary active transporter that functions as a Na(+)-independent organic anion (OA)/dicarboxylate antiporter where the uptake of one molecule of OA into the cell is coupled with an efflux of one molecule of intracellular dicarboxylate such as 2-oxoglutarate or glutarate. Mediates the uptake of OA across the basolateral side of proximal tubule epithelial cells, thereby contributing to the renal elimination of endogenous OA from the systemic circulation into the urine. Functions as a biopterin transporters involved in the uptake and the secretion of coenzymes tetrahydrobiopterin (BH4), dihydrobiopterin (BH2) and sepiapterin to urine, thereby determining baseline levels of blood biopterins. Transports prostaglandin E2 (PGE2) and prostaglandin F2-alpha (PGF2-alpha) and may contribute to their renal excretion. Also mediates the uptake of cyclic nucleotides such as cAMP and cGMP. Involved in the transport of neuroactive tryptophan metabolites kynurenate (KYNA) and xanthurenate (XA) and may contribute to their secretion from the brain. May transport glutamate. Also involved in the disposition of uremic toxins and potentially toxic xenobiotics by the renal organic anion secretory pathway, helping reduce their undesired toxicological effects on the body. Uremic toxins include the indoxyl sulfate (IS), hippurate/N-benzoylglycine (HA), indole acetate (IA), 3-carboxy-4- methyl-5-propyl-2-furanpropionate (CMPF) and urate. Xenobiotics include the mycotoxin ochratoxin (OTA). May also contribute to the transport of organic compounds in testes across the blood-testis-barrier. In Bos taurus (Bovine), this protein is Solute carrier family 22 member 6.